A 176-amino-acid polypeptide reads, in one-letter code: UBA-like domain-containing protein 1 (176 aa).

2 stretches are compositionally biased toward low complexity: residues 88–105 (ESFH…TSAT) and 120–137 (TPSW…QHLQ). A disordered region spans residues 88–176 (ESFHSGGSSG…RAHPAMEAER (89 aa)). A compositionally biased stretch (pro residues) spans 138–150 (PQPPLWTPAPPSP). Residues 166-176 (PRAHPAMEAER) are compositionally biased toward basic and acidic residues.

This sequence belongs to the UBALD family.

In Rattus norvegicus (Rat), this protein is UBA-like domain-containing protein 1 (Ubald1).